Here is a 138-residue protein sequence, read N- to C-terminus: Small ribosomal subunit protein uS11c (138 aa).

The protein belongs to the universal ribosomal protein uS11 family. As to quaternary structure, part of the 30S ribosomal subunit.

The protein localises to the plastid. The protein resides in the chloroplast. The protein is Small ribosomal subunit protein uS11c of Morus indica (Mulberry).